The chain runs to 382 residues: FK506-binding protein 4 (382 aa).

The tract at residues 139–274 is disordered; it reads GLEVDEEIES…KEEPKKKITK (136 aa). Over residues 141–173 the composition is skewed to acidic residues; it reads EVDEEIESDEEVESDEEIESDEEIESEEEEEEP. 2 stretches are compositionally biased toward basic and acidic residues: residues 180-190 and 196-270; these read RPAEEVKEIAS and EKKE…EPKK. One can recognise a PPIase FKBP-type domain in the interval 295-382; the sequence is GQRVGMRYIG…VFDVKLLSMK (88 aa).

The protein belongs to the FKBP-type PPIase family. FKBP3/4 subfamily. Binds to histones H3 and H4.

It is found in the nucleus. The catalysed reaction is [protein]-peptidylproline (omega=180) = [protein]-peptidylproline (omega=0). Its activity is regulated as follows. Inhibited by both FK506 and rapamycin. Functionally, PPIase that acts as a histone chaperone. Histone proline isomerase that increases the rate of cis-trans isomerization at prolines on the histone H3 N-terminal tail. Proline isomerization influences H3 methylation thereby regulating gene expression. The sequence is that of FK506-binding protein 4 (FKBP4) from Rhizopus delemar (strain RA 99-880 / ATCC MYA-4621 / FGSC 9543 / NRRL 43880) (Mucormycosis agent).